The primary structure comprises 62 residues: Rubredoxin-2 (62 aa).

Residues 7–58 (MWRCQMVNCGYVYDPDRGDKRRKVPAGTKFEDLPEDWRCPVCGAGKKSFRRL) enclose the Rubredoxin-like domain. Fe cation-binding residues include cysteine 10, cysteine 15, cysteine 45, and cysteine 48.

It belongs to the rubredoxin family. Monomer. Fe(3+) serves as cofactor.

Its function is as follows. Rubredoxin is a small nonheme, iron protein lacking acid-labile sulfide. Its single Fe, chelated to 4 Cys, functions as an electron acceptor and may also stabilize the conformation of the molecule. This Desulfovibrio desulfuricans (strain ATCC 27774 / DSM 6949 / MB) protein is Rubredoxin-2 (rd2).